Here is a 324-residue protein sequence, read N- to C-terminus: NAC domain-containing protein 21/22 (324 aa).

The region spanning 19–171 (LPPGFRFHPK…DWVLCRVFHK (153 aa)) is the NAC domain. Positions 120 to 137 (RKTLVFYQGRAPRGRKTD) match the Bipartite nuclear localization signal motif.

In terms of assembly, dimer. Interacts with SINAT5. Ubiquitinated. The interaction with SINAT5 mediate its proteasome-dependent degradation. Predominantly expressed in the root tip and in lateral root initiation sites. Also detected in expanding cotyledon, and in leaf primordia.

The protein localises to the nucleus. Functionally, transcriptional activator that mediates auxin signaling to promote lateral root development. Activates the expression of two downstream auxin-responsive genes, DBP and AIR3. The chain is NAC domain-containing protein 21/22 (NAC021) from Arabidopsis thaliana (Mouse-ear cress).